The following is a 397-amino-acid chain: Arginine biosynthesis bifunctional protein ArgJ (397 aa).

Substrate-binding residues include threonine 147, lysine 173, threonine 184, glutamate 270, asparagine 392, and threonine 397. The Nucleophile role is filled by threonine 184.

It belongs to the ArgJ family. As to quaternary structure, heterotetramer of two alpha and two beta chains.

It is found in the cytoplasm. It catalyses the reaction N(2)-acetyl-L-ornithine + L-glutamate = N-acetyl-L-glutamate + L-ornithine. It carries out the reaction L-glutamate + acetyl-CoA = N-acetyl-L-glutamate + CoA + H(+). Its pathway is amino-acid biosynthesis; L-arginine biosynthesis; L-ornithine and N-acetyl-L-glutamate from L-glutamate and N(2)-acetyl-L-ornithine (cyclic): step 1/1. The protein operates within amino-acid biosynthesis; L-arginine biosynthesis; N(2)-acetyl-L-ornithine from L-glutamate: step 1/4. In terms of biological role, catalyzes two activities which are involved in the cyclic version of arginine biosynthesis: the synthesis of N-acetylglutamate from glutamate and acetyl-CoA as the acetyl donor, and of ornithine by transacetylation between N(2)-acetylornithine and glutamate. This Streptococcus mutans serotype c (strain ATCC 700610 / UA159) protein is Arginine biosynthesis bifunctional protein ArgJ.